The following is a 351-amino-acid chain: MDKSKALEAALSQIERSFGKGSIMKLGSNENVVEIETISTGSLGLDIALGVGGLPRGRIIEIYGPESSGKTTLALQTIAEAQKKGGICAFVDAEHALDPVYARKLGVDLQNLLISQPDTGEQALEITDTLVRSGRVDVLVVDSVAALTPRAEIEGEMGDTVPGLQARLMSQALRKLTASISKSNTMVIFINQIRMKIGVMFGSPETTTGGNALKFYASVRLDIRRIGAVKEREEVIGNQTRVKVVKNKMAPPFKQVEFDIMYGEGVSKTGELVDLGVKAGIVEKSGAWFSYNSQRLGQGRENAKTFLRDNPDLAREIELSLRQNAGLIADRFLQNGGPDPDDGDGDATAEM.

64-71 (GPESSGKT) contacts ATP. The interval 330-351 (DRFLQNGGPDPDDGDGDATAEM) is disordered. Acidic residues predominate over residues 339-351 (DPDDGDGDATAEM).

Belongs to the RecA family.

Its subcellular location is the cytoplasm. Can catalyze the hydrolysis of ATP in the presence of single-stranded DNA, the ATP-dependent uptake of single-stranded DNA by duplex DNA, and the ATP-dependent hybridization of homologous single-stranded DNAs. It interacts with LexA causing its activation and leading to its autocatalytic cleavage. The sequence is that of Protein RecA from Rhizobium leguminosarum bv. viciae.